The primary structure comprises 209 residues: Molybdenum cofactor guanylyltransferase (209 aa).

Residues leucine 16–glycine 18, lysine 28, asparagine 56, aspartate 69, and aspartate 103 contribute to the GTP site. Residue aspartate 103 participates in Mg(2+) binding.

This sequence belongs to the MobA family. In terms of assembly, monomer. It depends on Mg(2+) as a cofactor.

Its subcellular location is the cytoplasm. The enzyme catalyses Mo-molybdopterin + GTP + H(+) = Mo-molybdopterin guanine dinucleotide + diphosphate. Transfers a GMP moiety from GTP to Mo-molybdopterin (Mo-MPT) cofactor (Moco or molybdenum cofactor) to form Mo-molybdopterin guanine dinucleotide (Mo-MGD) cofactor. This is Molybdenum cofactor guanylyltransferase from Rhizobium leguminosarum bv. trifolii (strain WSM2304).